We begin with the raw amino-acid sequence, 225 residues long: Small ribosomal subunit protein uS2 (225 aa).

Belongs to the universal ribosomal protein uS2 family.

This Metallosphaera sedula (strain ATCC 51363 / DSM 5348 / JCM 9185 / NBRC 15509 / TH2) protein is Small ribosomal subunit protein uS2.